The primary structure comprises 172 residues: Stellate orphon protein at 12D (172 aa).

Belongs to the casein kinase 2 subunit beta family. In terms of assembly, interacts in vitro with the casein kinase 2 alpha subunit (CkII-alpha). The relevance of such interaction is however unclear in vivo. Probably not expressed in wild-type flies. In males lacking the Y chromosome, it is testis-specific and constitutes the main component of star-shaped crystals.

In terms of biological role, unknown. In males lacking the Y chromosome, its strong overexpression leads to the appearance of proteinaceous star-shaped crystals in the primary spermatocytes causing meiotic drive, possibly by interfering with normal casein kinase 2 activity. The chain is Stellate orphon protein at 12D (Ste12DOR) from Drosophila melanogaster (Fruit fly).